The primary structure comprises 226 residues: Cytidylate kinase (226 aa).

11–19 (GPASAGKST) is a binding site for ATP.

The protein belongs to the cytidylate kinase family. Type 1 subfamily.

Its subcellular location is the cytoplasm. It carries out the reaction CMP + ATP = CDP + ADP. It catalyses the reaction dCMP + ATP = dCDP + ADP. The protein is Cytidylate kinase of Limosilactobacillus fermentum (strain NBRC 3956 / LMG 18251) (Lactobacillus fermentum).